The sequence spans 545 residues: MSSGNRQAPMPPPKPRNLGRGQFYQQGGYLTPQDSDTDSGISADCDQGSPRAAAGFGGTGFNGTVNGQQVNSQRRIPDLPPGAYQNYRSHSSADYLTPNSARKIASYSTTPRRLPLQPQQQAPATATKAKYRVRFADEVDSGASTSSGTSSTHISPRNDPQEMLMNSAVGAPQITSTFQQPASYMQNSSDAQYKMNKIEYPPVSRTPPVACSSRTGTLQRTPNRRLPISSTPQPQPTYADQMQSLPEPPPYTIAMQRLRSVEQQPQESFRDAFIRKSVNDTLQRRYRQRSSSLPRGNKSYYEGIDIYDAQPPIRPLPQQQTSLMTVANQLPGSLDNLHINNLNMRRRKLPTAPLMGSSCQLHLDNSDELTAYRALQFQMMQDELQRQQPPPQSFERPTLLRRTNMPQQQSFNIPHITTTGPPPPAMGLSVPVQYDQGEYGTQSVRAQLVALDQRGFRRVLVEKMMPGPFGFYIATGVVAGQRAGIFISRVSLPSLSPMLTVGDEIIYVDEEYVKGRSLEYVQSVIAGKTSVTITLLPAVGQPAIC.

Disordered stretches follow at residues 1–162 and 200–250; these read MSSG…DPQE and YPPV…EPPP. Polar residues predominate over residues 86 to 100; sequence NYRSHSSADYLTPNS. Low complexity-rich tracts occupy residues 109-128 and 141-152; these read TTPR…TATK and SGASTSSGTSST. Composition is skewed to polar residues over residues 212–221 and 228–244; these read SSRTGTLQRT and ISST…QMQS. A PDZ domain is found at 458–540; the sequence is RVLVEKMMPG…VTITLLPAVG (83 aa).

This is an uncharacterized protein from Caenorhabditis elegans.